Reading from the N-terminus, the 1021-residue chain is DNA-directed RNA polymerase 2B, chloroplastic/mitochondrial (1021 aa).

Positions 315 to 337 (KKQKAEKDKQKEDGEHVTQEQEK) are disordered. Active-site residues include D722, K797, and D954.

It belongs to the phage and mitochondrial RNA polymerase family.

The protein resides in the plastid. The protein localises to the chloroplast. It localises to the mitochondrion. The catalysed reaction is RNA(n) + a ribonucleoside 5'-triphosphate = RNA(n+1) + diphosphate. Its function is as follows. DNA-dependent RNA polymerase catalyzes the transcription of DNA into RNA using the four ribonucleoside triphosphates as substrates. The chain is DNA-directed RNA polymerase 2B, chloroplastic/mitochondrial (RPOT2-TOM) from Nicotiana tabacum (Common tobacco).